The chain runs to 214 residues: Neuromodulin (214 aa).

The interval 1 to 214 is disordered; that stretch reads MLCCMRRTKQ…EEAKPDQENA (214 aa). Residues Cys-3 and Cys-4 are each lipidated (S-palmitoyl cysteine). Composition is skewed to basic and acidic residues over residues 9 to 33, 52 to 88, and 95 to 122; these read KQVE…DKAH, MKDD…KTEE, and LEVK…KDTP. The region spanning 32–61 is the IQ domain; it reads AHKAATKIQASFRGHIIRKKMKDDKKDDNS. Over residues 124-133 the composition is skewed to low complexity; that stretch reads EENQASAESE. Basic and acidic residues-rich tracts occupy residues 150–160, 168–193, and 205–214; these read QAKEESKKADV, ASEK…EIKA, and EEAKPDQENA.

This sequence belongs to the neuromodulin family. As to quaternary structure, binds calmodulin with a greater affinity in the absence of Ca(2+) than in its presence. Palmitoylated. Palmitoylation is essential for plasma membrane association.

Its subcellular location is the cell membrane. The protein resides in the cell projection. It is found in the growth cone membrane. It localises to the synapse. The protein localises to the filopodium membrane. This protein is associated with nerve growth. It is a major component of the motile 'growth cones' that form the tips of elongating axons. Plays a role in axonal and dendritic filopodia induction. In Xenopus laevis (African clawed frog), this protein is Neuromodulin (gap43).